The chain runs to 343 residues: N-acetyl-gamma-glutamyl-phosphate reductase (343 aa).

The active site involves Cys-149.

It belongs to the NAGSA dehydrogenase family. Type 1 subfamily.

The protein resides in the cytoplasm. It catalyses the reaction N-acetyl-L-glutamate 5-semialdehyde + phosphate + NADP(+) = N-acetyl-L-glutamyl 5-phosphate + NADPH + H(+). It participates in amino-acid biosynthesis; L-arginine biosynthesis; N(2)-acetyl-L-ornithine from L-glutamate: step 3/4. Its function is as follows. Catalyzes the NADPH-dependent reduction of N-acetyl-5-glutamyl phosphate to yield N-acetyl-L-glutamate 5-semialdehyde. This is N-acetyl-gamma-glutamyl-phosphate reductase from Methanococcus maripaludis (strain C5 / ATCC BAA-1333).